Here is a 122-residue protein sequence, read N- to C-terminus: Large ribosomal subunit protein bL12 (122 aa).

It belongs to the bacterial ribosomal protein bL12 family. Homodimer. Part of the ribosomal stalk of the 50S ribosomal subunit. Forms a multimeric L10(L12)X complex, where L10 forms an elongated spine to which 2 to 4 L12 dimers bind in a sequential fashion. Binds GTP-bound translation factors.

Functionally, forms part of the ribosomal stalk which helps the ribosome interact with GTP-bound translation factors. Is thus essential for accurate translation. This chain is Large ribosomal subunit protein bL12, found in Mycoplasma genitalium (strain ATCC 33530 / DSM 19775 / NCTC 10195 / G37) (Mycoplasmoides genitalium).